A 122-amino-acid chain; its full sequence is MIQMQTILNVADNSGAKKVMCIKVLGGTHHMIAHLGDVIVVSIKSSIPKGKVKKGEVCKALIIRTKCGVTRSDGSNIKFDSNDVVLLNKQGEPFGTRIFGSVPRELRVKKFSKIVSLAEEVL.

The protein belongs to the universal ribosomal protein uL14 family. As to quaternary structure, part of the 50S ribosomal subunit. Forms a cluster with proteins L3 and L19. In the 70S ribosome, L14 and L19 interact and together make contacts with the 16S rRNA in bridges B5 and B8.

Functionally, binds to 23S rRNA. Forms part of two intersubunit bridges in the 70S ribosome. The polypeptide is Large ribosomal subunit protein uL14 (Orientia tsutsugamushi (strain Boryong) (Rickettsia tsutsugamushi)).